A 624-amino-acid chain; its full sequence is ADP,ATP carrier protein 1, chloroplastic (624 aa).

The transit peptide at 1–79 directs the protein to the chloroplast; the sequence is MEAVIQTRGL…KERSTEFICK (79 aa). Ala-80 carries the N-acetylalanine modification. The next 6 membrane-spanning stretches (helical) occupy residues 108-128, 182-202, 240-260, 315-335, 446-466, and 545-565; these read VEVA…CILF, ALFY…GFVM, LFYV…FWGF, AMMS…WWVN, LLTG…APLV, and LANS…AWLA. A disordered region spans residues 579 to 624; that stretch reads SEEELEKEMERASSVKIPVVSQDESGNGSLGESPSSSPEKSAPTNL. Low complexity predominate over residues 602–624; it reads ESGNGSLGESPSSSPEKSAPTNL.

The protein belongs to the ADP/ATP translocase tlc (TC 2.A.12.2) family.

The protein resides in the plastid. It localises to the chloroplast membrane. May function as an ATP importer. This is ADP,ATP carrier protein 1, chloroplastic (AATP1) from Arabidopsis thaliana (Mouse-ear cress).